We begin with the raw amino-acid sequence, 551 residues long: Structure-specific endonuclease subunit MUS81 (551 aa).

2 disordered regions span residues His-84–Trp-131 and Phe-229–Pro-259. Positions Ala-92–Pro-107 are enriched in low complexity. Residue Ser-95 is modified to Phosphoserine. The span at Val-110–Trp-131 shows a compositional bias: polar residues. Residues Gly-124–Ala-244 are interaction with BLM. Residues Trp-131–Arg-230 form a winged helix domain (WHD); critical for endonuclease activity region. Positions Phe-229 to Asp-238 are enriched in basic and acidic residues. The 103-residue stretch at Leu-270–Gly-372 folds into the ERCC4 domain. Active-site residues include Asp-274, Glu-277, and Asp-307. 5 residues coordinate Mg(2+): Asp-274, Glu-277, Asp-307, Glu-333, and Arg-334. The helix-hairpin-helix (2HhH); involved in DNA recognition and bending stretch occupies residues Val-471 to Cys-545.

It belongs to the XPF family. As to quaternary structure, part of the heterodimeric DNA structure-specific endonuclease complex MUS81-EME1. Part of the heterodimeric DNA structure-specific endonuclease complex MUS81-EME2. Interacts with BLM; may stimulate the endonuclease activity of MUS81. Interacts with SLX4/BTBD12; this interaction is direct and links the MUS81-EME1 complex to SLX4, which may coordinate the action of the structure-specific endonuclease during DNA repair. Interacts with DCLRE1B/Apollo. Interacts with RECQL5; this interaction stimulates mitotic DNA synthesis. Interacts with CHEK2. Mg(2+) serves as cofactor. As to expression, expressed highly in testis. Expressed also in bone marrow, brain, thymus and to a lesser extent in heart and skeletal muscle, colon, kidney and spleen.

The protein resides in the nucleus. It localises to the nucleolus. In terms of biological role, catalytic subunit of two functionally distinct, structure-specific, heterodimeric DNA endonucleases MUS81-EME1 and MUS81-EME2 that are involved in the maintenance of genome stability. Both endonucleases have essentially the same substrate specificity though MUS81-EME2 is more active than its MUS81-EME1 counterpart. Both cleave 3'-flaps and nicked Holliday junctions, and exhibit limited endonuclease activity with 5' flaps and nicked double-stranded DNAs. MUS81-EME2 which is active during the replication of DNA is more specifically involved in replication fork processing. Replication forks frequently encounter obstacles to their passage, including DNA base lesions, DNA interstrand cross-links, difficult-to-replicate sequences, transcription bubbles, or tightly bound proteins. One mechanism for the restart of a stalled replication fork involves nucleolytic cleavage mediated by the MUS81-EME2 endonuclease. By acting upon the stalled fork, MUS81-EME2 generates a DNA double-strand break (DSB) that can be repaired by homologous recombination, leading to the restoration of an active fork. MUS81-EME2 could also function in telomere maintenance. MUS81-EME1, on the other hand, is active later in the cell cycle and functions in the resolution of mitotic recombination intermediates including the Holliday junctions, the four-way DNA intermediates that form during homologous recombination. The protein is Structure-specific endonuclease subunit MUS81 of Mus musculus (Mouse).